An 822-amino-acid polypeptide reads, in one-letter code: MKFSLSWLREHLDFTASVEEICARLNIIGLEVEGVENPADRLVGFRTAKIVEAHRHPDADRLQVCRVAAGAGFEDVQVVCGAPNARAGLHVIFATPGTYVPGLDITIKKGKIRGQDSGGMLCSLRELGIGEESNGIAELSETAPIGESYAAYAELDDPVIEIAITPNRGDALSIRGIARDLAAGGIGHLKPWLTEAVEGDFPSPLTWKTEHPACPYIVGRVIRGVKNGPSPDWLQRRLESVGVKPISALVDVTNYLTYDLGRPLHVFDVAKLKGDTLTVTHAARETFTGLDGREYVLGTEDMIIVDEAGVQSLAGLIGGESSGVDENTIDVFVESALFDPVRIALTGRRLAIHTDARQRFERGIDPAQVLNGLEAATVMIRDLCGGEVSEITEAGALPDWKRTARLRFERLKTLGGVDIAADDTVRSLEHLGFEVTERTEDAATFLVPSWRNDIASGQVLAQAPTLDEDVASRAASHVQAMEAECDLLEEVLRLYGLDNVPAVALPQTTVVPAPAVTPLQARAALLRRVCAARGLTETVGFSFVAQDDAALFGDVPETQHLLNPIATDLDQLRPTPLINLARALSRNLARGLGLSGEGALFEVGPSFDATGQHLRLAGLRAGLTAREPGVAAHEATLWEAKADLTAALVALGVPEAALSVTADAPGFYHPGRSGQVRQGPKMVLGTFGELHPRVARALGLSGTVVAFEVYLDQVPLPKAKRKAAPVLSPLQPVRRDFAFVAGPDVEIQAVLKAARMADRNLVQDVRLFDVFEGGSLPEGHRSLGVEVVLQPQSESLTDTQLEAVSKSVEAAVLKATGAVLRR.

In terms of domain architecture, tRNA-binding spans 39–150 (ADRLVGFRTA…ETAPIGESYA (112 aa)). The region spanning 399 to 502 (DWKRTARLRF…RLYGLDNVPA (104 aa)) is the B5 domain. Asp-486, Glu-489, and Glu-490 together coordinate Mg(2+). Residues 728-821 (SPLQPVRRDF…VLKATGAVLR (94 aa)) form the FDX-ACB domain.

Belongs to the phenylalanyl-tRNA synthetase beta subunit family. Type 1 subfamily. In terms of assembly, tetramer of two alpha and two beta subunits. Mg(2+) is required as a cofactor.

It localises to the cytoplasm. It carries out the reaction tRNA(Phe) + L-phenylalanine + ATP = L-phenylalanyl-tRNA(Phe) + AMP + diphosphate + H(+). The protein is Phenylalanine--tRNA ligase beta subunit of Gluconobacter oxydans (strain 621H) (Gluconobacter suboxydans).